A 467-amino-acid polypeptide reads, in one-letter code: Retinoic acid receptor RXR-alpha (467 aa).

Residues 1 to 61 (MDTKHFLPLD…LHSPISTLSS (61 aa)) are disordered. The modulating stretch occupies residues 1 to 139 (MDTKHFLPLD…GNMSSFTKHI (139 aa)). Lysine 4 is covalently cross-linked (Glycyl lysine isopeptide (Lys-Gly) (interchain with G-Cter in SUMO2)). A phosphoserine mark is found at serine 22 and serine 28. Low complexity predominate over residues 32-55 (PSLHPSLGPGLGSPLGSPGQLHSP). Phosphoserine; by MAPK8 and MAPK9 occurs at positions 61 and 75. The interval 79 to 109 (PHSMSVPTTPTLGFETGSPQLNSPMNPVSSS) is disordered. Polar residues predominate over residues 83-109 (SVPTTPTLGFETGSPQLNSPMNPVSSS). Residue threonine 87 is modified to Phosphothreonine; by MAPK8 and MAPK9. A Glycyl lysine isopeptide (Lys-Gly) (interchain with G-Cter in SUMO) cross-link involves residue lysine 113. Serine 134 carries the post-translational modification Phosphoserine. Zn(2+) contacts are provided by cysteine 140 and cysteine 143. Residues 140 to 160 (CAICGDRSSGKHYGVYSCEGC) form an NR C4-type zinc finger. The nuclear receptor DNA-binding region spans 140-205 (CAICGDRSSG…RYQKCLAMGM (66 aa)). Lysine 150 bears the N6-acetyllysine mark. Zn(2+)-binding residues include cysteine 157 and cysteine 160. Residues 165–170 (KRTVRK) are nuclear localization signal. Positions 176, 182, 192, and 195 each coordinate Zn(2+). The NR C4-type zinc-finger motif lies at 176 to 200 (CRDNKDCLIDKRQRNRCQYCRYQKC). The interval 206–229 (KREAVQEERQRGKDRNENEVESTS) is hinge. Residues 211 to 223 (QEERQRGKDRNEN) are compositionally biased toward basic and acidic residues. Residues 211-233 (QEERQRGKDRNENEVESTSSANE) form a disordered region. An NR LBD domain is found at 232 to 463 (NEDMPVEKIL…TFLMEMLEAP (232 aa)). The residue at position 264 (serine 264) is a Phosphoserine. Serine 265 is subject to Phosphoserine; by MAPK8 and MAPK9. 9-cis-retinoate is bound by residues arginine 321 and alanine 332. The all-trans-retinoate site is built by arginine 321 and alanine 332. Residues 353 to 373 (RVLTELVSKMRDMQMDKTELG) form a required for nuclear export region.

The protein belongs to the nuclear hormone receptor family. NR2 subfamily. In terms of assembly, homodimer. Heterodimer (via C-terminus) with RARA; required for ligand-dependent retinoic acid receptor transcriptional activity; association with RARA is enhanced by pulsatile shear stress. Heterodimer with PPARA (via the leucine-like zipper in the LBD); the interaction is required for PPARA transcriptional activity. Heterodimerizes with PPARG. Heterodimerizes (via NR LBD) with RARB. Heterodimerizes with NR1H4; the heterodimerization enhances the binding affinity for LXXLL motifs from coactivators. Interacts with NCOA3 and NCOA6 coactivators. Interacts with FAM120B. Interacts with coactivator PELP1, SENP6, SFPQ, DNTTIP2 and RNF8. Interacts with PRMT2. Interacts with ASXL1. Interacts with BHLHE40/DEC1, BHLHE41/DEC2, MED1, NCOR1 and NCOR2. Interacts in a ligand-dependent fashion with MED1 and NCOA1. Interacts with VDR. Interacts with EP300; the interaction is decreased by 9-cis retinoic acid. Heterodimer (via C-terminus) with NR4A1 (DNA-binding domain); the interaction is enhanced by 9-cis retinoic acid. NR4A1 competes with EP300 for interaction with RXRA and thereby attenuates EP300 mediated acetylation of RXRA. In the absence of hormonal ligand, interacts with TACC1. Interacts ith IGFBP3. Phosphorylated on serine and threonine residues mainly in the N-terminal modulating domain. Constitutively phosphorylated on Ser-22 in the presence or absence of ligand. Under stress conditions, hyperphosphorylated by activated JNK on Ser-61, Ser-75, Thr-87 and Ser-265. Phosphorylated on Ser-28, in vitro, by PKA. This phosphorylation is required for repression of cAMP-mediated transcriptional activity of RARA. In terms of processing, ubiquitinated by UBR5, leading to its degradation: UBR5 specifically recognizes and binds ligand-bound RXRA when it is not associated with coactivators (NCOAs). In presence of NCOAs, the UBR5-degron is not accessible, preventing its ubiquitination and degradation. Post-translationally, sumoylation negatively regulates transcriptional activity. Desumoylated specifically by SENP6. Acetylated by EP300; acetylation enhances DNA binding and transcriptional activity. Expressed in the adrenal gland with main expression in the zona fasciculata and medulla (at protein level). Expressed in aortic endothelial cells, with high expression in the descending thoracic aorta and the outer curvature of the aortic arch, where pulsatory shear stress exists, but very low in the inner curvature of the aortic arch, where oscillatory shear stress prevails (at protein level).

It is found in the nucleus. The protein localises to the cytoplasm. It localises to the mitochondrion. Functionally, receptor for retinoic acid that acts as a transcription factor. Forms homo- or heterodimers with retinoic acid receptors (RARs) and binds to target response elements in response to their ligands, all-trans or 9-cis retinoic acid, to regulate gene expression in various biological processes. The RAR/RXR heterodimers bind to the retinoic acid response elements (RARE) composed of tandem 5'-AGGTCA-3' sites known as DR1-DR5 to regulate transcription. The high affinity ligand for retinoid X receptors (RXRs) is 9-cis retinoic acid. In the absence of ligand, the RXR-RAR heterodimers associate with a multiprotein complex containing transcription corepressors that induce histone deacetylation, chromatin condensation and transcriptional suppression. On ligand binding, the corepressors dissociate from the receptors and coactivators are recruited leading to transcriptional activation. Serves as a common heterodimeric partner for a number of nuclear receptors, such as RARA, RARB and PPARA. The RXRA/RARB heterodimer can act as a transcriptional repressor or transcriptional activator, depending on the RARE DNA element context. The RXRA/PPARA heterodimer is required for PPARA transcriptional activity on fatty acid oxidation genes such as ACOX1 and the P450 system genes. Together with RARA, positively regulates microRNA-10a expression, thereby inhibiting the GATA6/VCAM1 signaling response to pulsatile shear stress in vascular endothelial cells. Acts as an enhancer of RARA binding to RARE DNA element. May facilitate the nuclear import of heterodimerization partners such as VDR and NR4A1. Promotes myelin debris phagocytosis and remyelination by macrophages. Plays a role in the attenuation of the innate immune system in response to viral infections, possibly by negatively regulating the transcription of antiviral genes such as type I IFN genes. Involved in the regulation of calcium signaling by repressing ITPR2 gene expression, thereby controlling cellular senescence. The sequence is that of Retinoic acid receptor RXR-alpha (Rxra) from Rattus norvegicus (Rat).